Reading from the N-terminus, the 312-residue chain is Aspartate carbamoyltransferase catalytic subunit (312 aa).

2 residues coordinate carbamoyl phosphate: R55 and T56. K83 lines the L-aspartate pocket. Carbamoyl phosphate contacts are provided by R105, H133, and Q136. Positions 166 and 220 each coordinate L-aspartate. Carbamoyl phosphate contacts are provided by G261 and P262.

This sequence belongs to the aspartate/ornithine carbamoyltransferase superfamily. ATCase family. As to quaternary structure, heterododecamer (2C3:3R2) of six catalytic PyrB chains organized as two trimers (C3), and six regulatory PyrI chains organized as three dimers (R2).

It catalyses the reaction carbamoyl phosphate + L-aspartate = N-carbamoyl-L-aspartate + phosphate + H(+). Its pathway is pyrimidine metabolism; UMP biosynthesis via de novo pathway; (S)-dihydroorotate from bicarbonate: step 2/3. Its function is as follows. Catalyzes the condensation of carbamoyl phosphate and aspartate to form carbamoyl aspartate and inorganic phosphate, the committed step in the de novo pyrimidine nucleotide biosynthesis pathway. The polypeptide is Aspartate carbamoyltransferase catalytic subunit (Prosthecochloris aestuarii (strain DSM 271 / SK 413)).